A 269-amino-acid chain; its full sequence is uncharacterized protein (269 aa).

In terms of domain architecture, HTH gntR-type spans 5–73; the sequence is APKWRELADR…RGHGTVVRRK (69 aa). Positions 33–52 form a DNA-binding region, H-T-H motif; the sequence is IRDLVEAGEGSKETVHRAYK.

The imp locus inhibits the extrachromosomal maintenance of the Streptomyces plasmid SLP1. This is an uncharacterized protein from Streptomyces coelicolor (strain ATCC BAA-471 / A3(2) / M145).